Consider the following 280-residue polypeptide: 3-phenylpropionate-dihydrodiol/cinnamic acid-dihydrodiol dehydrogenase (280 aa).

A substrate-binding site is contributed by Ser143. The active-site Proton acceptor is Tyr156.

Belongs to the short-chain dehydrogenases/reductases (SDR) family.

The enzyme catalyses 3-(cis-5,6-dihydroxycyclohexa-1,3-dien-1-yl)propanoate + NAD(+) = 3-(2,3-dihydroxyphenyl)propanoate + NADH + H(+). The catalysed reaction is (2E)-3-(cis-5,6-dihydroxycyclohexa-1,3-dien-1-yl)prop-2-enoate + NAD(+) = (2E)-3-(2,3-dihydroxyphenyl)prop-2-enoate + NADH + H(+). It functions in the pathway aromatic compound metabolism; 3-phenylpropanoate degradation. Converts 3-phenylpropionate-dihydrodiol (PP-dihydrodiol) and cinnamic acid-dihydrodiol (CI-dihydrodiol) into 3-(2,3-dihydroxylphenyl)propanoic acid (DHPP) and 2,3-dihydroxicinnamic acid (DHCI), respectively. The polypeptide is 3-phenylpropionate-dihydrodiol/cinnamic acid-dihydrodiol dehydrogenase (Photorhabdus laumondii subsp. laumondii (strain DSM 15139 / CIP 105565 / TT01) (Photorhabdus luminescens subsp. laumondii)).